The primary structure comprises 545 residues: Esterase-5B (545 aa).

The N-terminal stretch at M1–A19 is a signal peptide. A disulfide bridge links C84 with C103. N-linked (GlcNAc...) asparagine glycosylation is present at N113. The active-site Acyl-ester intermediate is S207. A disulfide bridge links C259 with C271. The N-linked (GlcNAc...) asparagine glycan is linked to N421. H467 (charge relay system) is an active-site residue. N-linked (GlcNAc...) asparagine glycosylation occurs at N507. C515 and C536 are disulfide-bonded.

This sequence belongs to the type-B carboxylesterase/lipase family. Homodimer.

It is found in the secreted. The enzyme catalyses a carboxylic ester + H2O = an alcohol + a carboxylate + H(+). The sequence is that of Esterase-5B (Est-5B) from Drosophila persimilis (Fruit fly).